The following is a 564-amino-acid chain: Carbamoyl phosphate synthase large chain, N-terminal section (564 aa).

The segment at 1–399 is carboxyphosphate synthetic domain; sequence MPETPNKVLI…ALQKAIRSLE (399 aa). Arg-127, Arg-167, Gly-173, Gly-174, Glu-206, Val-208, Glu-213, Gly-239, Val-240, His-241, Gln-282, and Glu-296 together coordinate ATP. In terms of domain architecture, ATP-grasp spans 131 to 325; it reads RAFMKKIGEP…IARIAAKIAI (195 aa). Residues Gln-282, Glu-296, and Asn-298 each coordinate Mg(2+). Positions 282, 296, and 298 each coordinate Mn(2+). Residues 400-560 are oligomerization domain; that stretch reads IGEPGLGPSP…YSTYEEECEA (161 aa).

Belongs to the CarB family. In terms of assembly, composed of two chains; the small (or glutamine) chain promotes the hydrolysis of glutamine to ammonia, which is used by the large (or ammonia) chain to synthesize carbamoyl phosphate. Tetramer of heterodimers (alpha,beta)4. Requires Mg(2+) as cofactor. It depends on Mn(2+) as a cofactor.

It catalyses the reaction hydrogencarbonate + L-glutamine + 2 ATP + H2O = carbamoyl phosphate + L-glutamate + 2 ADP + phosphate + 2 H(+). The enzyme catalyses hydrogencarbonate + NH4(+) + 2 ATP = carbamoyl phosphate + 2 ADP + phosphate + 2 H(+). The protein operates within amino-acid biosynthesis; L-arginine biosynthesis; carbamoyl phosphate from bicarbonate: step 1/1. Its pathway is pyrimidine metabolism; UMP biosynthesis via de novo pathway; (S)-dihydroorotate from bicarbonate: step 1/3. Large subunit of the glutamine-dependent carbamoyl phosphate synthetase (CPSase). CPSase catalyzes the formation of carbamoyl phosphate from the ammonia moiety of glutamine, carbonate, and phosphate donated by ATP, constituting the first step of 2 biosynthetic pathways, one leading to arginine and/or urea and the other to pyrimidine nucleotides. The large subunit (synthetase) binds the substrates ammonia (free or transferred from glutamine from the small subunit), hydrogencarbonate and ATP and carries out an ATP-coupled ligase reaction, activating hydrogencarbonate by forming carboxy phosphate which reacts with ammonia to form carbamoyl phosphate. This Methanopyrus kandleri (strain AV19 / DSM 6324 / JCM 9639 / NBRC 100938) protein is Carbamoyl phosphate synthase large chain, N-terminal section (carB1).